The sequence spans 171 residues: MLKLRDYIRDIPDFPKKGVVFKDITTALKDPELLAEIIINLSSHYEKEVPDKIVGIESRGFILGPAIAKELGAGFVPARKGGKLPSKTASQEYNTEYSTDVLEIHEDAIEKNERVLIVDDLLATGGTAQATAKIVEQLEGQVVGFAFMLELSFLKGREKIGDYPIKVLEQF.

It belongs to the purine/pyrimidine phosphoribosyltransferase family. Homodimer.

Its subcellular location is the cytoplasm. It carries out the reaction AMP + diphosphate = 5-phospho-alpha-D-ribose 1-diphosphate + adenine. It participates in purine metabolism; AMP biosynthesis via salvage pathway; AMP from adenine: step 1/1. Functionally, catalyzes a salvage reaction resulting in the formation of AMP, that is energically less costly than de novo synthesis. This chain is Adenine phosphoribosyltransferase, found in Natranaerobius thermophilus (strain ATCC BAA-1301 / DSM 18059 / JW/NM-WN-LF).